The following is a 238-amino-acid chain: N-acetylneuraminic acid outer membrane channel protein NanC (238 aa).

A signal peptide spans M1 to A23. Over A24–T25 the chain is Periplasmic. A transmembrane span lies at residues L26–Y32. The Extracellular segment spans residues R33–Y39. The hydrophobic stretch at E40–W49 threads the membrane. Residues Q50–G52 lie on the Periplasmic side of the membrane. At W53–T61 the chain is embedded in the membrane. At W62–N76 the chain is on the extracellular side. Residues D77–I86 are membrane-embedded. Over K87–Q91 the chain is Periplasmic. Over W92 to F102 the chain traverses the membrane. Over S103–T107 the chain is Extracellular. At R108–W117 the chain is embedded in the membrane. Residues D118–D122 lie on the Periplasmic side of the membrane. At L123–D132 the chain is embedded in the membrane. At W133 to H151 the chain is on the extracellular side. The hydrophobic stretch at R152 to Y159 threads the membrane. Over H160–D164 the chain is Periplasmic. At F165–L173 the chain is embedded in the membrane. The Extracellular segment spans residues Y174 to T190. A transmembrane helix spans residues E191–M200. The Periplasmic portion of the chain corresponds to T201–D203. A membrane pass occupies residues I204–Y212. The Extracellular segment spans residues L213 to N228. A membrane pass occupies residues S229–F236. The Periplasmic portion of the chain corresponds to K237 to L238.

The protein belongs to the oligogalacturonate-specific porin KdgM (TC 1.B.35) family. NanC subfamily. Monomer.

The protein localises to the cell outer membrane. The enzyme catalyses N-acetylneuraminate(in) = N-acetylneuraminate(out). In terms of biological role, outer membrane channel protein allowing the entry of N-acetylneuraminic acid (Neu5Ac, the most abundant sialic acid on host cell surfaces) into the bacteria. NanC proteins form high-conductance channels which are open at low membrane potentials and which have a weak anion selectivity. This chain is N-acetylneuraminic acid outer membrane channel protein NanC (nanC), found in Escherichia coli O157:H7.